The following is a 454-amino-acid chain: MLRSLWSGVSGMQAHQVALDVESNNIANVNTTGFKYSRASFVDMISQTKLIATSPHKGGLGGQNDVSVGLGVNVNSTTKVFSQGSTQNTDVKTDLAIEGDGFFIISPDRGKTQNFTRDGEFLFDANGNLVTNGGYVVQGWMKDDLRNAEKISEDDFFRVDTTKPIQNIQIDPAMMMPARASSNISLRANLNAGRHVDQVANVFGLGSTTKTPVDGINPIYDSHDNLTQKAEDFGALFTQSGDAIGLTENQGIWVSYKTSEMVNDIEATSGESSIEINHTRISFTNDSAASGISSVVAAQNAINALKQKTGVEAFVDNGMLRLQNKNNMDGDAEVKNIRITADGTGAFANFIEGDSDITAFRYRYTTSASPDSGTGQFRTTEDLRALIQYDANLIKDPSQAYTDSTASVSVKFNKYGMLEIQNKDNGDELKQDLNIFVSGYSSENSTNNFSEQDG.

Belongs to the flagella basal body rod proteins family.

The protein resides in the bacterial flagellum basal body. Functionally, a flexible structure which links the flagellar filament to the drive apparatus in the basal body. Absence of the gene leads to absence of the hook protein, lack of the flagellar filament and thus loss of mobility. Approximately wild-type levels of the flagellar subunits are still produced and accumulate mostly in the cytosol. The chain is Flagellar hook protein FlgE (flgE) from Helicobacter mustelae.